The following is a 233-amino-acid chain: 7-cyano-7-deazaguanine synthase (233 aa).

7–17 (LSGGLDSAVTS) is an ATP binding site. The Zn(2+) site is built by Cys195, Cys206, Cys209, and Cys212.

It belongs to the QueC family. Zn(2+) is required as a cofactor.

It carries out the reaction 7-carboxy-7-deazaguanine + NH4(+) + ATP = 7-cyano-7-deazaguanine + ADP + phosphate + H2O + H(+). Its pathway is purine metabolism; 7-cyano-7-deazaguanine biosynthesis. Catalyzes the ATP-dependent conversion of 7-carboxy-7-deazaguanine (CDG) to 7-cyano-7-deazaguanine (preQ(0)). This chain is 7-cyano-7-deazaguanine synthase, found in Methanococcus maripaludis (strain C7 / ATCC BAA-1331).